The chain runs to 583 residues: Pre-mRNA-processing protein 45 (583 aa).

Disordered stretches follow at residues 1-68 (MTSI…APED), 177-253 (KPKN…LTAE), 321-424 (MQQR…EQNR), and 519-583 (RGAA…DEEN). A compositionally biased stretch (basic and acidic residues) spans 203-225 (TSRKNDRIMKIVERQQDPMEPPK). The span at 233–244 (RGPPSPPPPIMH) shows a compositional bias: pro residues. Positions 325–350 (LAEKEKAQKEEHLRALAQKAREERSR) are enriched in basic and acidic residues. Low complexity predominate over residues 367 to 377 (RSYSDASSRSR). Composition is skewed to basic and acidic residues over residues 386 to 424 (ARER…EQNR), 519 to 538 (RGAA…KDTA), and 569 to 583 (PDSR…DEEN).

The protein belongs to the SNW family. As to quaternary structure, associated with the spliceosome.

It is found in the nucleus. In terms of biological role, involved in pre-mRNA splicing. This chain is Pre-mRNA-processing protein 45 (prp45), found in Emericella nidulans (strain FGSC A4 / ATCC 38163 / CBS 112.46 / NRRL 194 / M139) (Aspergillus nidulans).